A 126-amino-acid chain; its full sequence is Aspartate 1-decarboxylase (126 aa).

The Schiff-base intermediate with substrate; via pyruvic acid role is filled by S25. S25 is subject to Pyruvic acid (Ser). T57 contacts substrate. Residue Y58 is the Proton donor of the active site. Residue 73–75 (GAA) coordinates substrate.

This sequence belongs to the PanD family. In terms of assembly, heterooctamer of four alpha and four beta subunits. Pyruvate serves as cofactor. Is synthesized initially as an inactive proenzyme, which is activated by self-cleavage at a specific serine bond to produce a beta-subunit with a hydroxyl group at its C-terminus and an alpha-subunit with a pyruvoyl group at its N-terminus.

The protein resides in the cytoplasm. The catalysed reaction is L-aspartate + H(+) = beta-alanine + CO2. It functions in the pathway cofactor biosynthesis; (R)-pantothenate biosynthesis; beta-alanine from L-aspartate: step 1/1. Functionally, catalyzes the pyruvoyl-dependent decarboxylation of aspartate to produce beta-alanine. This Salmonella choleraesuis (strain SC-B67) protein is Aspartate 1-decarboxylase.